Here is a 116-residue protein sequence, read N- to C-terminus: Ribosome-binding factor A (116 aa).

It belongs to the RbfA family. Monomer. Binds 30S ribosomal subunits, but not 50S ribosomal subunits or 70S ribosomes.

It localises to the cytoplasm. Its function is as follows. One of several proteins that assist in the late maturation steps of the functional core of the 30S ribosomal subunit. Associates with free 30S ribosomal subunits (but not with 30S subunits that are part of 70S ribosomes or polysomes). Required for efficient processing of 16S rRNA. May interact with the 5'-terminal helix region of 16S rRNA. This Buchnera aphidicola subsp. Cinara cedri (strain Cc) protein is Ribosome-binding factor A.